Here is a 278-residue protein sequence, read N- to C-terminus: Bis(5'-nucleosyl)-tetraphosphatase, symmetrical (278 aa).

This sequence belongs to the Ap4A hydrolase family.

It carries out the reaction P(1),P(4)-bis(5'-adenosyl) tetraphosphate + H2O = 2 ADP + 2 H(+). Its function is as follows. Hydrolyzes diadenosine 5',5'''-P1,P4-tetraphosphate to yield ADP. The polypeptide is Bis(5'-nucleosyl)-tetraphosphatase, symmetrical (Buchnera aphidicola subsp. Baizongia pistaciae (strain Bp)).